The chain runs to 709 residues: Dibasic-processing endoprotease (709 aa).

The N-terminal stretch at 1 to 22 (MHPALLCGPILAIFLQFLVSSC) is a signal peptide. 2 propeptides span residues 23-82 (SPLE…IRKR) and 83-102 (GIDA…RYKR). Residues 103–668 (DASESDELLN…QPVLEPSYRE (566 aa)) are Lumenal-facing. Positions 128–440 (QWHIFNSNNP…FGKLDASKFV (313 aa)) constitute a Peptidase S8 domain. A glycan (N-linked (GlcNAc...) asparagine) is linked at Asn-155. Active-site charge relay system residues include Asp-162 and His-200. 2 disulfides stabilise this stretch: Cys-216–Cys-363 and Cys-308–Cys-338. The Charge relay system role is filled by Ser-371. A P/Homo B domain is found at 449–588 (VNPQTWLIAP…QLALWGESEN (140 aa)). Residues Asn-463, Asn-471, and Asn-620 are each glycosylated (N-linked (GlcNAc...) asparagine). The helical transmembrane segment at 669 to 693 (IVAFITFFLLFAFIFVAVIWTWISA) threads the bilayer. At 694–709 (FWKAKAPPPLSQQEIA) the chain is on the cytoplasmic side.

The protein belongs to the peptidase S8 family. Furin subfamily. Ca(2+) serves as cofactor. Post-translationally, N-glycosylated.

It localises to the golgi apparatus. The protein localises to the trans-Golgi network membrane. Membrane-bound, subtilisin-like serine protease that processes the P-factor precursor and other precursor proteins. Essential for cell viability. Cleaves substrate on the C-terminal side of dibasic residues. The sequence is that of Dibasic-processing endoprotease (krp1) from Schizosaccharomyces pombe (strain 972 / ATCC 24843) (Fission yeast).